The following is a 491-amino-acid chain: Glutamyl-tRNA(Gln) amidotransferase subunit A (491 aa).

Residues lysine 79 and serine 154 each act as charge relay system in the active site. Serine 178 (acyl-ester intermediate) is an active-site residue.

It belongs to the amidase family. GatA subfamily. As to quaternary structure, heterotrimer of A, B and C subunits.

It carries out the reaction L-glutamyl-tRNA(Gln) + L-glutamine + ATP + H2O = L-glutaminyl-tRNA(Gln) + L-glutamate + ADP + phosphate + H(+). Functionally, allows the formation of correctly charged Gln-tRNA(Gln) through the transamidation of misacylated Glu-tRNA(Gln) in organisms which lack glutaminyl-tRNA synthetase. The reaction takes place in the presence of glutamine and ATP through an activated gamma-phospho-Glu-tRNA(Gln). The sequence is that of Glutamyl-tRNA(Gln) amidotransferase subunit A from Synechococcus sp. (strain CC9605).